The sequence spans 243 residues: Small ribosomal subunit protein uS3 (243 aa).

The KH type-2 domain occupies 39–110; it reads IRVFIQKKYG…QVRINVVEIE (72 aa). Positions 216–243 are disordered; that stretch reads QPLPVGASPRRKGNRRPQQFEDRSNDGK. The segment covering 233 to 243 has biased composition (basic and acidic residues); sequence QQFEDRSNDGK.

Belongs to the universal ribosomal protein uS3 family. As to quaternary structure, part of the 30S ribosomal subunit. Forms a tight complex with proteins S10 and S14.

Its function is as follows. Binds the lower part of the 30S subunit head. Binds mRNA in the 70S ribosome, positioning it for translation. This is Small ribosomal subunit protein uS3 from Prochlorococcus marinus (strain SARG / CCMP1375 / SS120).